A 31-amino-acid polypeptide reads, in one-letter code: Cytochrome b6-f complex subunit 6 (31 aa).

The chain crosses the membrane as a helical span at residues 4–26; that stretch reads IVSYFGFLLTASTITPALFIGLS.

This sequence belongs to the PetL family. The 4 large subunits of the cytochrome b6-f complex are cytochrome b6, subunit IV (17 kDa polypeptide, PetD), cytochrome f and the Rieske protein, while the 4 small subunits are PetG, PetL, PetM and PetN. The complex functions as a dimer.

Its subcellular location is the plastid. The protein localises to the chloroplast thylakoid membrane. Component of the cytochrome b6-f complex, which mediates electron transfer between photosystem II (PSII) and photosystem I (PSI), cyclic electron flow around PSI, and state transitions. PetL is important for photoautotrophic growth as well as for electron transfer efficiency and stability of the cytochrome b6-f complex. The polypeptide is Cytochrome b6-f complex subunit 6 (Nymphaea alba (White water-lily)).